The following is a 483-amino-acid chain: (R)-mandelonitrile beta-glucosyltransferase (483 aa).

His22 functions as the Proton acceptor in the catalytic mechanism. An an anthocyanidin-binding site is contributed by His22. The Charge relay role is filled by Asp124. Positions 146, 363, 378, 381, 382, 383, and 386 each coordinate UDP-alpha-D-glucose. An anthocyanidin is bound at residue Ala401. Residues Glu402 and Gln403 each coordinate UDP-alpha-D-glucose.

Belongs to the UDP-glycosyltransferase family.

The catalysed reaction is (R)-mandelonitrile + UDP-alpha-D-glucose = (R)-prunasin + UDP + H(+). Involved in the biosynthesis of the cyanogenic glycoside (R)-prunasin, a precursor of (R)-amygdalin, which at high concentrations is associated with intense bitterness in kernels of almond. Stereo-selectively glucosylates (R)-mandelonitrile to produce (R)-prunasin. The protein is (R)-mandelonitrile beta-glucosyltransferase of Prunus dulcis (Almond).